We begin with the raw amino-acid sequence, 335 residues long: Glutamyl-tRNA reductase (335 aa).

Substrate is bound by residues 60–63 (TCHR), S110, 115–117 (ETE), and Q121. C61 functions as the Nucleophile in the catalytic mechanism. Position 189–194 (189–194 (GYSEIN)) interacts with NADP(+).

Belongs to the glutamyl-tRNA reductase family. In terms of assembly, homodimer.

The enzyme catalyses (S)-4-amino-5-oxopentanoate + tRNA(Glu) + NADP(+) = L-glutamyl-tRNA(Glu) + NADPH + H(+). The protein operates within porphyrin-containing compound metabolism; protoporphyrin-IX biosynthesis; 5-aminolevulinate from L-glutamyl-tRNA(Glu): step 1/2. Functionally, catalyzes the NADPH-dependent reduction of glutamyl-tRNA(Glu) to glutamate 1-semialdehyde (GSA). This is Glutamyl-tRNA reductase from Chlamydia trachomatis serovar D (strain ATCC VR-885 / DSM 19411 / UW-3/Cx).